A 490-amino-acid polypeptide reads, in one-letter code: UDP-N-acetylmuramate--L-alanine ligase (490 aa).

An ATP-binding site is contributed by 122 to 128; sequence GTHGKTS.

The protein belongs to the MurCDEF family.

The protein localises to the cytoplasm. It catalyses the reaction UDP-N-acetyl-alpha-D-muramate + L-alanine + ATP = UDP-N-acetyl-alpha-D-muramoyl-L-alanine + ADP + phosphate + H(+). The protein operates within cell wall biogenesis; peptidoglycan biosynthesis. Its function is as follows. Cell wall formation. In Mycobacteroides abscessus (strain ATCC 19977 / DSM 44196 / CCUG 20993 / CIP 104536 / JCM 13569 / NCTC 13031 / TMC 1543 / L948) (Mycobacterium abscessus), this protein is UDP-N-acetylmuramate--L-alanine ligase.